A 222-amino-acid chain; its full sequence is Phosphoribosylformylglycinamidine synthase subunit PurQ (222 aa).

In terms of domain architecture, Glutamine amidotransferase type-1 spans 3–222 (SAVVLLPGLN…LFEGALGIAA (220 aa)). C86 acts as the Nucleophile in catalysis. Catalysis depends on residues H196 and E198.

Part of the FGAM synthase complex composed of 1 PurL, 1 PurQ and 2 PurS subunits.

The protein localises to the cytoplasm. The enzyme catalyses N(2)-formyl-N(1)-(5-phospho-beta-D-ribosyl)glycinamide + L-glutamine + ATP + H2O = 2-formamido-N(1)-(5-O-phospho-beta-D-ribosyl)acetamidine + L-glutamate + ADP + phosphate + H(+). It catalyses the reaction L-glutamine + H2O = L-glutamate + NH4(+). It functions in the pathway purine metabolism; IMP biosynthesis via de novo pathway; 5-amino-1-(5-phospho-D-ribosyl)imidazole from N(2)-formyl-N(1)-(5-phospho-D-ribosyl)glycinamide: step 1/2. Its function is as follows. Part of the phosphoribosylformylglycinamidine synthase complex involved in the purines biosynthetic pathway. Catalyzes the ATP-dependent conversion of formylglycinamide ribonucleotide (FGAR) and glutamine to yield formylglycinamidine ribonucleotide (FGAM) and glutamate. The FGAM synthase complex is composed of three subunits. PurQ produces an ammonia molecule by converting glutamine to glutamate. PurL transfers the ammonia molecule to FGAR to form FGAM in an ATP-dependent manner. PurS interacts with PurQ and PurL and is thought to assist in the transfer of the ammonia molecule from PurQ to PurL. The chain is Phosphoribosylformylglycinamidine synthase subunit PurQ from Mesorhizobium japonicum (strain LMG 29417 / CECT 9101 / MAFF 303099) (Mesorhizobium loti (strain MAFF 303099)).